The sequence spans 511 residues: Activin receptor type-2B (511 aa).

The signal sequence occupies residues 1-20 (MGASVALTFLLLLATFRAGS). At 21–136 (GHDEVETREC…KPQPSASVLN (116 aa)) the chain is on the extracellular side. A disulfide bridge links cysteine 30 with cysteine 61. 2 N-linked (GlcNAc...) asparagine glycosylation sites follow: asparagine 43 and asparagine 67. Cystine bridges form between cysteine 86-cysteine 105, cysteine 92-cysteine 104, and cysteine 106-cysteine 111. The chain crosses the membrane as a helical span at residues 137 to 157 (ILIYSLLPIVGLSMAILLAFW). Over 158-511 (MYRHRKPSYG…VDLPPKESSI (354 aa)) the chain is Cytoplasmic. Residues 189-477 (LQLLDIKARG…LSAGCVEERI (289 aa)) form the Protein kinase domain. ATP contacts are provided by residues 195 to 203 (KARGRFGCV) and lysine 216. The active-site Proton acceptor is aspartate 320.

It belongs to the protein kinase superfamily. TKL Ser/Thr protein kinase family. TGFB receptor subfamily.

Its subcellular location is the membrane. It catalyses the reaction L-threonyl-[receptor-protein] + ATP = O-phospho-L-threonyl-[receptor-protein] + ADP + H(+). The catalysed reaction is L-seryl-[receptor-protein] + ATP = O-phospho-L-seryl-[receptor-protein] + ADP + H(+). In terms of biological role, receptor for activin A, activin B and inhibin A. Involved in transmembrane signaling. This Xenopus laevis (African clawed frog) protein is Activin receptor type-2B (acvr2b).